Consider the following 858-residue polypeptide: MVNFTVDQIRAIMDKKANIRNMSVIAHVDHGKSTLTDSLVCKAGIIASARAGETRFTDTRKDEQERCITIKSTAISLFYELSENDLNFIKQSKDGAGFLINLIDSPGHVDFSSEVTAALRVTDGALVVVDCVSGVCVQTETVLRQAIAERIKPVLMMNKMDRALLELQLEPEELYQTFQRIVENVNVIISTYGEGESGPMGNIMIDPVLGTVGFGSGLHGWAFTLKQFAEMYVAKFAAKGEGQLGPAERAKKVEDMMKKLWGDRYFDPANGKFSKSATSPEGKKLPRTFCQLILDPIFKVFDAIMNFKKEETAKLIEKLDIKLDSEDKDKEGKPLLKAVMRRWLPAGDALLQMITIHLPSPVTAQKYRCELLYEGPPDDEAAMGIKSCDPKGPLMMYISKMVPTSDKGRFYAFGRVFSGLVSTGLKVRIMGPNYTPGKKEDLYLKPIQRTILMMGRYVEPIEDVPCGNIVGLVGVDQFLVKTGTITTFEHAHNMRVMKFSVSPVVRVAVEAKNPADLPKLVEGLKRLAKSDPMVQCIIEESGEHIIAGAGELHLEICLKDLEEDHACIPIKKSDPVVSYRETVSEESNVLCLSKSPNKHNRLYMKARPFPDGLAEDIDKGEVSARQELKQRARYLAEKYEWDVAEARKIWCFGPDGTGPNILTDITKGVQYLNEIKDSVVAGFQWATKEGALCEENMRGVRFDVHDVTLHADAIHRGGGQIIPTARRCLYASVLTAQPRLMEPIYLVEIQCPEQVVGGIYGVLNRKRGHVFEESQVAGTPMFVVKAYLPVNESFGFTADLRSNTGGQAFPQCVFDHWQILPGDPFDNSSRPSQVVAETRKRKGLKEGIPALDNFLDKL.

The tr-type G domain occupies 17 to 362 (ANIRNMSVIA…MITIHLPSPV (346 aa)). 26 to 33 (AHVDHGKS) contributes to the GTP binding site. Thr54 bears the Phosphothreonine mark. Phosphothreonine; by EEF2K is present on Thr57. Position 59 is a phosphothreonine (Thr59). At Lys152 the chain carries N6-succinyllysine. Residues 158–161 (NKMD) and 216–218 (SGL) contribute to the GTP site. At Lys235 the chain carries N6-acetyllysine. The residue at position 239 (Lys239) is an N6-acetyllysine; alternate. Residue Lys239 forms a Glycyl lysine isopeptide (Lys-Gly) (interchain with G-Cter in SUMO1); alternate linkage. Tyr265 bears the Phosphotyrosine; by CSK mark. Lys272 carries the N6-acetyllysine; alternate modification. Lys272 carries the post-translational modification N6-succinyllysine; alternate. At Lys275 the chain carries N6-acetyllysine. Residue Lys322 forms a Glycyl lysine isopeptide (Lys-Gly) (interchain with G-Cter in SUMO) linkage. At Ser325 the chain carries Phosphoserine. Phosphotyrosine; by CSK is present on Tyr373. Thr435 bears the Phosphothreonine mark. Lys439 and Lys445 each carry N6-acetyllysine. Ser502 bears the Phosphoserine mark. Lys525 carries the N6,N6,N6-trimethyllysine; by EEF2KMT modification. Lys529 is covalently cross-linked (Glycyl lysine isopeptide (Lys-Gly) (interchain with G-Cter in SUMO)). Position 572 is an N6-succinyllysine (Lys572). The residue at position 595 (Ser595) is a Phosphoserine; by CDK2. An N6-acetyllysine modification is found at Lys619. His715 carries the post-translational modification Diphthamide.

Belongs to the TRAFAC class translation factor GTPase superfamily. Classic translation factor GTPase family. EF-G/EF-2 subfamily. In terms of assembly, binds to 80S ribosomes. Actively translating ribosomes show mutually exclusive binding of eIF5a (EIF5A or EIF5A2) and EEF2/eEF2. Interacts with SERBP1; interaction sequesters EEF2/eEF2 at the A-site of the ribosome, thereby blocking the interaction sites of the mRNA-tRNA complex, promoting ribosome stabilization and hibernation. Interacts with HABP4; interaction takes place at the A-site of hibernating ribosomes and promotes ribosome stabilization. Component of the mRNA surveillance SURF complex, at least composed of ERF1, ERF3 (ERF3A or ERF3B), EEF2, UPF1/RENT1, SMG1, SMG8 and SMG9. Interacts with RBPMS2. Phosphorylation by EF-2 kinase completely inactivates EF-2; it requires prior phosphorylation by CDK2 at Ser-595 during mitotic prometaphase. Phosphorylation by CSK promotes SUMOylation, proteolytic cleavage, and nuclear translocation if the C-terminal fragment. In terms of processing, diphthamide is 2-[3-carboxyamido-3-(trimethyl-ammonio)propyl]histidine. Post-translationally, ISGylated. Proteolytically processed at two sites following phosphorylation by CSK. In terms of processing, SUMOylated following phosphorylation by CSK, promotes proteolytic cleavage.

The protein resides in the cytoplasm. Its subcellular location is the nucleus. The enzyme catalyses GTP + H2O = GDP + phosphate + H(+). Catalyzes the GTP-dependent ribosomal translocation step during translation elongation. During this step, the ribosome changes from the pre-translocational (PRE) to the post-translocational (POST) state as the newly formed A-site-bound peptidyl-tRNA and P-site-bound deacylated tRNA move to the P and E sites, respectively. Catalyzes the coordinated movement of the two tRNA molecules, the mRNA and conformational changes in the ribosome. The chain is Elongation factor 2 (EEF2) from Pongo abelii (Sumatran orangutan).